The primary structure comprises 399 residues: Elongation factor Tu (399 aa).

Residues 10–204 (KPHVNIGTIG…AVDASIPEPE (195 aa)) form the tr-type G domain. Residues 19–26 (GHVDHGKT) are G1. 19 to 26 (GHVDHGKT) is a binding site for GTP. Threonine 26 is a binding site for Mg(2+). Positions 60–64 (GITIN) are G2. Residues 81–84 (DCPG) form a G3 region. Residues 81–85 (DCPGH) and 136–139 (NKCD) contribute to the GTP site. The G4 stretch occupies residues 136 to 139 (NKCD). The segment at 174-176 (SGL) is G5.

It belongs to the TRAFAC class translation factor GTPase superfamily. Classic translation factor GTPase family. EF-Tu/EF-1A subfamily. In terms of assembly, monomer.

Its subcellular location is the cytoplasm. The enzyme catalyses GTP + H2O = GDP + phosphate + H(+). Its function is as follows. GTP hydrolase that promotes the GTP-dependent binding of aminoacyl-tRNA to the A-site of ribosomes during protein biosynthesis. The polypeptide is Elongation factor Tu (Prochlorococcus marinus (strain MIT 9312)).